An 812-amino-acid chain; its full sequence is Glycerol-3-phosphate acyltransferase (812 aa).

An HXXXXD motif motif is present at residues 308 to 313; that stretch reads CHRSHM.

This sequence belongs to the GPAT/DAPAT family.

It localises to the cell inner membrane. The enzyme catalyses sn-glycerol 3-phosphate + an acyl-CoA = a 1-acyl-sn-glycero-3-phosphate + CoA. The protein operates within phospholipid metabolism; CDP-diacylglycerol biosynthesis; CDP-diacylglycerol from sn-glycerol 3-phosphate: step 1/3. In Pseudoalteromonas translucida (strain TAC 125), this protein is Glycerol-3-phosphate acyltransferase.